Reading from the N-terminus, the 186-residue chain is ATP synthase subunit delta (186 aa).

Belongs to the ATPase delta chain family. In terms of assembly, F-type ATPases have 2 components, F(1) - the catalytic core - and F(0) - the membrane proton channel. F(1) has five subunits: alpha(3), beta(3), gamma(1), delta(1), epsilon(1). F(0) has three main subunits: a(1), b(2) and c(10-14). The alpha and beta chains form an alternating ring which encloses part of the gamma chain. F(1) is attached to F(0) by a central stalk formed by the gamma and epsilon chains, while a peripheral stalk is formed by the delta and b chains.

Its subcellular location is the cell inner membrane. F(1)F(0) ATP synthase produces ATP from ADP in the presence of a proton or sodium gradient. F-type ATPases consist of two structural domains, F(1) containing the extramembraneous catalytic core and F(0) containing the membrane proton channel, linked together by a central stalk and a peripheral stalk. During catalysis, ATP synthesis in the catalytic domain of F(1) is coupled via a rotary mechanism of the central stalk subunits to proton translocation. Its function is as follows. This protein is part of the stalk that links CF(0) to CF(1). It either transmits conformational changes from CF(0) to CF(1) or is implicated in proton conduction. This is ATP synthase subunit delta from Brucella anthropi (strain ATCC 49188 / DSM 6882 / CCUG 24695 / JCM 21032 / LMG 3331 / NBRC 15819 / NCTC 12168 / Alc 37) (Ochrobactrum anthropi).